Consider the following 641-residue polypeptide: Macrolide export ATP-binding/permease protein MacB (641 aa).

The ABC transporter domain occupies 2–236 (IFLKNICKNI…LILKTMPKEK (235 aa)). 34 to 41 (GQSGSGKT) is a binding site for ATP. 4 helical membrane-spanning segments follow: residues 265–285 (ILTM…VALG), 519–539 (ACVA…IMLV), 571–591 (MICT…IFAF), and 604–624 (AYSV…FGFF).

This sequence belongs to the ABC transporter superfamily. Macrolide exporter (TC 3.A.1.122) family. Homodimer.

It localises to the cell inner membrane. Its function is as follows. Non-canonical ABC transporter that contains transmembrane domains (TMD), which form a pore in the inner membrane, and an ATP-binding domain (NBD), which is responsible for energy generation. Confers resistance against macrolides. The sequence is that of Macrolide export ATP-binding/permease protein MacB from Campylobacter jejuni subsp. jejuni serotype O:2 (strain ATCC 700819 / NCTC 11168).